The chain runs to 1720 residues: DNA-directed RNA polymerase I subunit RPA1 (1720 aa).

Cys-64, Cys-67, Cys-74, His-77, Cys-104, and Cys-107 together coordinate Zn(2+). A clamp region spans residues 110–201; sequence LTCPRAVIHL…IALFWKAHMN (92 aa). Positions 205 and 208 each coordinate Zn(2+). Ser-240 is modified (phosphoserine). Residues 320–426 form a clamp region; the sequence is FTNGQTVNLQ…IRQILEKKEG (107 aa). The rudder stretch occupies residues 403-416; it reads DSEMDKLMMDKYPG. Residues Lys-424, Arg-429, and Arg-436 each coordinate DNA. Residues 468-542 are involved in RRN3 binding to Pol I complex; the sequence is YPQPVTPWNV…QGTKIVCRHV (75 aa). Arg-552 contributes to the RNA binding site. Mg(2+) is bound by residues Asp-588, Asp-590, and Asp-592. Asp-592 is a binding site for RNA. Residues 805–883 are funnel; it reads KPKADVKRQR…NEINKACMPF (79 aa). A bridging helix region spans residues 960–1001; it reads KPPEFFFHCMAGREGLVDTAVKTSRSGYLQRCIIKHLEGLVV. A mediates the interaction with TOP2A region spans residues 1060–1155; the sequence is ADPKKALHHF…SLSVWRPDIY (96 aa). The interval 1207 to 1248 is trigger loop; the sequence is PGEAVGLLAAQSIGEPSTQMTLNTFHFAGRGEMNVTLGIPRL. Arg-1249 lines the DNA pocket. The interval 1365–1498 is disordered; the sequence is RNVNTRRATQ…SQEPQGPEAM (134 aa). The segment covering 1373–1390 has biased composition (basic and acidic residues); sequence TQRDLDNAGELGRSRGEQ. Residue Ser-1386 is modified to Phosphoserine. 2 stretches are compositionally biased toward acidic residues: residues 1391–1412 and 1422–1446; these read EGDEEEEGHIVDAEAEEGDADA and EEEVDYESEEEEEREGEENDDEDMQ. Positions 1447–1461 are enriched in basic and acidic residues; sequence EERNPHREGARKTQE. Over residues 1462–1474 the composition is skewed to acidic residues; that stretch reads QDEEVGLGTEEDP.

This sequence belongs to the RNA polymerase beta' chain family. In terms of assembly, component of the RNA polymerase I (Pol I) complex consisting of 13 subunits: a ten-subunit catalytic core composed of POLR1A/RPA1, POLR1B/RPA2, POLR1C/RPAC1, POLR1D/RPAC2, POLR1H/RPA12, POLR2E/RPABC1, POLR2F/RPABC2, POLR2H/RPABC3, POLR2K/RPABC4 and POLR2L/RPABC5; a mobile stalk subunit POLR1F/RPA43 protruding from the core and additional subunits homologous to general transcription factors POLR1E/RPA49 and POLR1G/RPA34. Part of Pol I pre-initiation complex (PIC), in which Pol I core assembles with RRN3 and promoter-bound UTBF and SL1/TIF-IB complex. Interacts (via dock II domain) with TOP2A; this interaction may assist Pol I transcription initiation by releasing supercoils occurring during DNA unwinding. Interacts with CAVIN1; this interaction induces the dissociation of Pol I complex paused at rDNA terminator sequences. Interacts with MYO1C. Interacts with ERBB2. Interacts with DDX11. Interacts with RECQL5. The cofactor is Mg(2+).

The protein localises to the nucleus. Its subcellular location is the nucleolus. It localises to the chromosome. It carries out the reaction RNA(n) + a ribonucleoside 5'-triphosphate = RNA(n+1) + diphosphate. Catalytic core component of RNA polymerase I (Pol I), a DNA-dependent RNA polymerase which synthesizes ribosomal RNA precursors using the four ribonucleoside triphosphates as substrates. Transcribes 47S pre-rRNAs from multicopy rRNA gene clusters, giving rise to 5.8S, 18S and 28S ribosomal RNAs. Pol I-mediated transcription cycle proceeds through transcription initiation, transcription elongation and transcription termination stages. During transcription initiation, Pol I pre-initiation complex (PIC) is recruited by the selectivity factor 1 (SL1/TIF-IB) complex bound to the core promoter that precedes an rDNA repeat unit. The PIC assembly bends the promoter favoring the formation of the transcription bubble and promoter escape. Once the polymerase has escaped from the promoter it enters the elongation phase during which RNA is actively polymerized, based on complementarity with the template DNA strand. Highly processive, assembles in structures referred to as 'Miller trees' where many elongating Pol I complexes queue and transcribe the same rDNA coding regions. At terminator sequences downstream of the rDNA gene, PTRF interacts with Pol I and halts Pol I transcription leading to the release of the RNA transcript and polymerase from the DNA. Forms Pol I active center together with the second largest subunit POLR1B/RPA2. Appends one nucleotide at a time to the 3' end of the nascent RNA, with POLR1A/RPA1 contributing a Mg(2+)-coordinating DxDGD motif, and POLR1B/RPA2 participating in the coordination of a second Mg(2+) ion and providing lysine residues believed to facilitate Watson-Crick base pairing between the incoming nucleotide and the template base. Typically, Mg(2+) ions direct a 5' nucleoside triphosphate to form a phosphodiester bond with the 3' hydroxyl of the preceding nucleotide of the nascent RNA, with the elimination of pyrophosphate. Has proofreading activity: Pauses and backtracks to allow the cleavage of a missincorporated nucleotide via POLR1H/RPA12. High Pol I processivity is associated with decreased transcription fidelity. The polypeptide is DNA-directed RNA polymerase I subunit RPA1 (Homo sapiens (Human)).